The following is a 488-amino-acid chain: Protein nucleotidyltransferase YdiU (488 aa).

The ATP site is built by glycine 91, glycine 93, arginine 94, lysine 114, aspartate 126, glycine 127, arginine 177, and arginine 184. A disordered region spans residues 108 to 127 (RFDIQLKGSGPTPYSRRGDG). Aspartate 253 (proton acceptor) is an active-site residue. Mg(2+) is bound by residues asparagine 254 and aspartate 263. ATP is bound at residue aspartate 263.

The protein belongs to the SELO family. Mg(2+) serves as cofactor. Mn(2+) is required as a cofactor.

It catalyses the reaction L-seryl-[protein] + ATP = 3-O-(5'-adenylyl)-L-seryl-[protein] + diphosphate. It carries out the reaction L-threonyl-[protein] + ATP = 3-O-(5'-adenylyl)-L-threonyl-[protein] + diphosphate. The catalysed reaction is L-tyrosyl-[protein] + ATP = O-(5'-adenylyl)-L-tyrosyl-[protein] + diphosphate. The enzyme catalyses L-histidyl-[protein] + UTP = N(tele)-(5'-uridylyl)-L-histidyl-[protein] + diphosphate. It catalyses the reaction L-seryl-[protein] + UTP = O-(5'-uridylyl)-L-seryl-[protein] + diphosphate. It carries out the reaction L-tyrosyl-[protein] + UTP = O-(5'-uridylyl)-L-tyrosyl-[protein] + diphosphate. Its function is as follows. Nucleotidyltransferase involved in the post-translational modification of proteins. It can catalyze the addition of adenosine monophosphate (AMP) or uridine monophosphate (UMP) to a protein, resulting in modifications known as AMPylation and UMPylation. This chain is Protein nucleotidyltransferase YdiU, found in Bacillus anthracis (strain A0248).